The chain runs to 222 residues: Putative N-acetylmannosamine-6-phosphate 2-epimerase (222 aa).

This sequence belongs to the NanE family.

The enzyme catalyses an N-acyl-D-glucosamine 6-phosphate = an N-acyl-D-mannosamine 6-phosphate. The protein operates within amino-sugar metabolism; N-acetylneuraminate degradation; D-fructose 6-phosphate from N-acetylneuraminate: step 3/5. Converts N-acetylmannosamine-6-phosphate (ManNAc-6-P) to N-acetylglucosamine-6-phosphate (GlcNAc-6-P). The sequence is that of Putative N-acetylmannosamine-6-phosphate 2-epimerase from Staphylococcus aureus (strain Mu3 / ATCC 700698).